We begin with the raw amino-acid sequence, 520 residues long: Protein FAM124A (520 aa).

Disordered regions lie at residues 1–34 (MDRKAGEDDWEDSGAETGGSDYSRLSSTSSELSV) and 311–334 (FKSGKHKGRAGNGQVQHFGGSQMD). Residues 20-32 (SDYSRLSSTSSEL) are compositionally biased toward low complexity.

It belongs to the FAM124 family.

In Xenopus laevis (African clawed frog), this protein is Protein FAM124A (fam124a).